A 79-amino-acid chain; its full sequence is MSLFDFFKKKKSAQKAKDRLSVAIALDRDSNIYPHLDQMKQEIMEVVKKYSQIKDVNITKDKVGDQDILDIEIVLEEGR.

This sequence belongs to the MinE family.

In terms of biological role, prevents the cell division inhibition by proteins MinC and MinD at internal division sites while permitting inhibition at polar sites. This ensures cell division at the proper site by restricting the formation of a division septum at the midpoint of the long axis of the cell. The sequence is that of Cell division topological specificity factor from Nitratiruptor sp. (strain SB155-2).